We begin with the raw amino-acid sequence, 946 residues long: Phosphatidylinositol 4,5-bisphosphate 5-phosphatase INP51 (946 aa).

Residues 151 to 480 form the SAC domain; it reads LKKLFSDGTF…YYWLDRTYTK (330 aa). Disordered regions lie at residues 872-902 and 927-946; these read SDSIAGPTHSPTPIPEPKRGRKLPPPSSDLK and PKRDPNPFVENEDEPLFIER. Positions 936-946 are enriched in acidic residues; that stretch reads ENEDEPLFIER.

Belongs to the synaptojanin family. The protein in the central section; belongs to the inositol 1,4,5-trisphosphate 5-phosphatase family. In terms of assembly, interacts with IRS4 and TAX4.

Its subcellular location is the cytoplasm. The protein resides in the cytoskeleton. It localises to the actin patch. It catalyses the reaction a 1,2-diacyl-sn-glycero-3-phospho-(1D-myo-inositol-4,5-bisphosphate) + H2O = a 1,2-diacyl-sn-glycero-3-phospho-(1D-myo-inositol 4-phosphate) + phosphate. With respect to regulation, IRS4 and TAX4 are both positive regulator of INP51 activity and phosphatidylinositol 4,5-bisphosphate turnover. Controls the cellular levels and subcellular distribution of phosphatidylinositol 4,5-bisphosphate (PtdIns(4,5)P2). Does not utilize phosphatidylinositol 3,5-bisphosphate (PtdIns(3,5)P2), nor phosphatidylinositol 3-phosphate (PtdIns(3)P) and phosphatidylinositol 4-phosphate (PtdIns(4)P). Plays an essential role in a TGN (trans Golgi network)-to-early endosome pathway. Involved in endocytosis and acts as a negative regulator of the Slm pathway which modulates polarized actin assembly and growth. The chain is Phosphatidylinositol 4,5-bisphosphate 5-phosphatase INP51 (INP51) from Saccharomyces cerevisiae (strain ATCC 204508 / S288c) (Baker's yeast).